The following is a 183-amino-acid chain: Hypoxanthine/guanine phosphoribosyltransferase (183 aa).

Belongs to the purine/pyrimidine phosphoribosyltransferase family. Archaeal HPRT subfamily. As to quaternary structure, homodimer.

The protein resides in the cytoplasm. The catalysed reaction is IMP + diphosphate = hypoxanthine + 5-phospho-alpha-D-ribose 1-diphosphate. The enzyme catalyses GMP + diphosphate = guanine + 5-phospho-alpha-D-ribose 1-diphosphate. It functions in the pathway purine metabolism; IMP biosynthesis via salvage pathway; IMP from hypoxanthine: step 1/1. Functionally, catalyzes a salvage reaction resulting in the formation of IMP that is energically less costly than de novo synthesis. This chain is Hypoxanthine/guanine phosphoribosyltransferase, found in Methanotorris igneus (strain DSM 5666 / JCM 11834 / Kol 5).